The following is a 479-amino-acid chain: MANHPIDQELTSPAEEELTPREIVAKLDEHIISQKNAKKAVAIALRNRTRRKKLDPEMREEIYPKNIIMIGPTGVGKTEIARRLSKLCGAPFLKVEATKYTEVGYVGRDVESMIRDLAVISMNLVKQEFRTKVEETAKQKAEEALLDILLPFPGENKHGSGQITGFATSSTLADEEDRKTHFLETREFMRKKLKTGKLDDQEVELDLPNPSVSQVPMLQVFGAGNLDDLDNQLQNVLGDILPKKNKKRKLKIPEALKALEESEAEKLLDPDKVQREALRRVEEMGIIFLDEIDKIAGREGKSGADVSREGVQRDLLPIVEGATVNTKIGPVKTDHILFIAAGAFHMTKPSDLIPELQGRFPIRVELEKLSREDFEKILTAPCSSLTRQYEALLSTDGIQLEFSLDGIQEIARIAYDMNEKHENIGARRLNTILERLLEEVSFEGPDLPESQRKVRIDGKYVTDRLQGVIQNKDLSQYIL.

ATP-binding positions include Ile32, 74–79 (GVGKTE), Asp290, Glu355, and Arg427.

This sequence belongs to the ClpX chaperone family. HslU subfamily. A double ring-shaped homohexamer of HslV is capped on each side by a ring-shaped HslU homohexamer. The assembly of the HslU/HslV complex is dependent on binding of ATP.

The protein resides in the cytoplasm. In terms of biological role, ATPase subunit of a proteasome-like degradation complex; this subunit has chaperone activity. The binding of ATP and its subsequent hydrolysis by HslU are essential for unfolding of protein substrates subsequently hydrolyzed by HslV. HslU recognizes the N-terminal part of its protein substrates and unfolds these before they are guided to HslV for hydrolysis. This Leptospira interrogans serogroup Icterohaemorrhagiae serovar Lai (strain 56601) protein is ATP-dependent protease ATPase subunit HslU.